A 258-amino-acid chain; its full sequence is MAFPMPPHQTAYDRAATIFSPEGDLYQVRYAFEAVKKGWTSLGIKTNEGVVIAAEKRFIGPLVDIDDIDKIYKIDDHIGVAFAGMGGDGRILIDYARVFTVRHRLLYGEPPPVELVAKVVADVKQAYTQHGGVRPFGVALIFAGVNPDGTTKVYRTDPGGQYFSFKAIAIGSGEQVANEMFEKHYRSDMSLEEATKLALKILYAIIRKTVEDKEKAIATLPDQVELAYITVKERMFTKMTKEQVKEIVDSMREELLQL.

The protein belongs to the peptidase T1A family. The 20S proteasome core is composed of 14 alpha and 14 beta subunits that assemble into four stacked heptameric rings, resulting in a barrel-shaped structure. The two inner rings, each composed of seven catalytic beta subunits, are sandwiched by two outer rings, each composed of seven alpha subunits. The catalytic chamber with the active sites is on the inside of the barrel. Has a gated structure, the ends of the cylinder being occluded by the N-termini of the alpha-subunits. Is capped at one or both ends by the proteasome regulatory ATPase, PAN.

Its subcellular location is the cytoplasm. Its activity is regulated as follows. The formation of the proteasomal ATPase PAN-20S proteasome complex, via the docking of the C-termini of PAN into the intersubunit pockets in the alpha-rings, triggers opening of the gate for substrate entry. Interconversion between the open-gate and close-gate conformations leads to a dynamic regulation of the 20S proteasome proteolysis activity. In terms of biological role, component of the proteasome core, a large protease complex with broad specificity involved in protein degradation. This Aeropyrum pernix (strain ATCC 700893 / DSM 11879 / JCM 9820 / NBRC 100138 / K1) protein is Proteasome subunit alpha.